A 69-amino-acid polypeptide reads, in one-letter code: uncharacterized protein (69 aa).

The helical transmembrane segment at 32–54 (MLGAIDVAVAVASVPTLFVVTAI) threads the bilayer.

It localises to the membrane. This is an uncharacterized protein from Sinorhizobium fredii (strain NBRC 101917 / NGR234).